Here is a 385-residue protein sequence, read N- to C-terminus: 8-amino-7-oxononanoate synthase (385 aa).

Arginine 21 contacts substrate. 108–109 (GF) contributes to the pyridoxal 5'-phosphate binding site. Histidine 133 is a substrate binding site. 3 residues coordinate pyridoxal 5'-phosphate: serine 179, histidine 207, and threonine 233. Residue lysine 236 is modified to N6-(pyridoxal phosphate)lysine. Position 352 (threonine 352) interacts with substrate.

Belongs to the class-II pyridoxal-phosphate-dependent aminotransferase family. BioF subfamily. In terms of assembly, homodimer. Pyridoxal 5'-phosphate serves as cofactor.

It catalyses the reaction 6-carboxyhexanoyl-[ACP] + L-alanine + H(+) = (8S)-8-amino-7-oxononanoate + holo-[ACP] + CO2. The protein operates within cofactor biosynthesis; biotin biosynthesis. Catalyzes the decarboxylative condensation of pimeloyl-[acyl-carrier protein] and L-alanine to produce 8-amino-7-oxononanoate (AON), [acyl-carrier protein], and carbon dioxide. The protein is 8-amino-7-oxononanoate synthase of Salmonella schwarzengrund (strain CVM19633).